The chain runs to 337 residues: MEPETEGPPPTIPVTPLQQMIASCTGAVLTSLMVTPLDVVKIRLQAQNNPFPKGKCFLYSNGLMDHMCVCEEESKKAWYKKPGNFRGTLDAFLKILRNEGIKSLWSGLPPTLVMAIPATVIYFTCYEQLSAFLKTKLGENETRIPIVAGVVARFGAVTVISPLELIRTKVQSKKFSYKELYQFVSMRVSEDGWISLWKGWAPTILRDVPFSAMYWYNYENLKRWLCEKSGLYEPTFMINFTSGALSGSFAAVATLPFDVVKTQKQTQLWTNEYCKFPAPLDMSTWTIMKNIVADKGFSGLFTGLIPRLVKIVPACAIMISSYELGKSFFQKQNVESR.

Solcar repeat units lie at residues V14–F132, N140–W224, and P234–F328. 6 helical membrane-spanning segments follow: residues M20–V40, L104–T124, I146–I166, W200–L221, F240–V260, and G299–I319.

It belongs to the mitochondrial carrier (TC 2.A.29) family.

The protein localises to the mitochondrion inner membrane. It catalyses the reaction glutathione(in) = glutathione(out). Its function is as follows. Probable mitochondrial transporter required for glutathione import into mitochondria. Glutathione, which plays key roles in oxidative metabolism, is produced exclusively in the cytosol and is imported in many organelles. Mitochondrial glutathione is required for the activity and stability of proteins containing iron-sulfur clusters, as well as erythropoiesis. In Mus musculus (Mouse), this protein is Mitochondrial glutathione transporter SLC25A40.